Here is a 72-residue protein sequence, read N- to C-terminus: MAKDDVIQMQGEVLENLPNATFRVKLENGHVVLGHISGKMRMNYIRILPGDKVTVELTPYDLSRARIVFRTK.

An S1-like domain is found at 1-72 (MAKDDVIQMQ…SRARIVFRTK (72 aa)).

It belongs to the IF-1 family. Component of the 30S ribosomal translation pre-initiation complex which assembles on the 30S ribosome in the order IF-2 and IF-3, IF-1 and N-formylmethionyl-tRNA(fMet); mRNA recruitment can occur at any time during PIC assembly.

The protein localises to the cytoplasm. Its function is as follows. One of the essential components for the initiation of protein synthesis. Stabilizes the binding of IF-2 and IF-3 on the 30S subunit to which N-formylmethionyl-tRNA(fMet) subsequently binds. Helps modulate mRNA selection, yielding the 30S pre-initiation complex (PIC). Upon addition of the 50S ribosomal subunit IF-1, IF-2 and IF-3 are released leaving the mature 70S translation initiation complex. The sequence is that of Translation initiation factor IF-1 2 from Cupriavidus necator (strain ATCC 17699 / DSM 428 / KCTC 22496 / NCIMB 10442 / H16 / Stanier 337) (Ralstonia eutropha).